Here is a 175-residue protein sequence, read N- to C-terminus: Bifunctional protein PyrR (175 aa).

Substrate-binding positions include Thr-40–Arg-41, Arg-85, Asp-102–Thr-110, Arg-135, and Val-159. The PRPP-binding motif lies at Val-98–Thr-110.

It belongs to the purine/pyrimidine phosphoribosyltransferase family. PyrR subfamily. As to quaternary structure, homodimer and homohexamer; in equilibrium.

The enzyme catalyses UMP + diphosphate = 5-phospho-alpha-D-ribose 1-diphosphate + uracil. Its function is as follows. Regulates transcriptional attenuation of the pyrimidine nucleotide (pyr) operon by binding in a uridine-dependent manner to specific sites on pyr mRNA. This disrupts an antiterminator hairpin in the RNA and favors formation of a downstream transcription terminator, leading to a reduced expression of downstream genes. In terms of biological role, also displays a weak uracil phosphoribosyltransferase activity which is not physiologically significant. This is Bifunctional protein PyrR from Staphylococcus epidermidis (strain ATCC 35984 / DSM 28319 / BCRC 17069 / CCUG 31568 / BM 3577 / RP62A).